Reading from the N-terminus, the 461-residue chain is Ribosomal protein uS12 methylthiotransferase RimO (461 aa).

The 116-residue stretch at 13–128 (PKVGFVSLGC…VMQHVHMHLP (116 aa)) folds into the MTTase N-terminal domain. The [4Fe-4S] cluster site is built by Cys22, Cys58, Cys87, Cys159, Cys163, and Cys166. A Radical SAM core domain is found at 145-390 (LTPRHYAYLK…MEVAEEVSAK (246 aa)). Residues 393–461 (AKKVGKTLKV…ADGHDLWGEV (69 aa)) enclose the TRAM domain.

This sequence belongs to the methylthiotransferase family. RimO subfamily. [4Fe-4S] cluster serves as cofactor.

It localises to the cytoplasm. The catalysed reaction is L-aspartate(89)-[ribosomal protein uS12]-hydrogen + (sulfur carrier)-SH + AH2 + 2 S-adenosyl-L-methionine = 3-methylsulfanyl-L-aspartate(89)-[ribosomal protein uS12]-hydrogen + (sulfur carrier)-H + 5'-deoxyadenosine + L-methionine + A + S-adenosyl-L-homocysteine + 2 H(+). In terms of biological role, catalyzes the methylthiolation of an aspartic acid residue of ribosomal protein uS12. This is Ribosomal protein uS12 methylthiotransferase RimO from Paraburkholderia xenovorans (strain LB400).